The chain runs to 306 residues: Ribosomal protein L11 methyltransferase (306 aa).

Residues threonine 139, glycine 173, aspartate 195, and asparagine 242 each coordinate S-adenosyl-L-methionine.

Belongs to the methyltransferase superfamily. PrmA family.

It is found in the cytoplasm. It carries out the reaction L-lysyl-[protein] + 3 S-adenosyl-L-methionine = N(6),N(6),N(6)-trimethyl-L-lysyl-[protein] + 3 S-adenosyl-L-homocysteine + 3 H(+). In terms of biological role, methylates ribosomal protein L11. The sequence is that of Ribosomal protein L11 methyltransferase from Nostoc sp. (strain PCC 7120 / SAG 25.82 / UTEX 2576).